The chain runs to 163 residues: Nucleotide-binding protein EAT1b_2037 (163 aa).

Belongs to the YajQ family.

Functionally, nucleotide-binding protein. In Exiguobacterium sp. (strain ATCC BAA-1283 / AT1b), this protein is Nucleotide-binding protein EAT1b_2037.